A 293-amino-acid chain; its full sequence is GPN-loop GTPase 3 (293 aa).

13–18 (GAGKST) is a binding site for GTP. The Gly-Pro-Asn (GPN)-loop; involved in dimer interface motif lies at 70–72 (GPN). 176 to 179 (SKMD) serves as a coordination point for GTP. Residues 272 to 281 (HEAQEPREPN) are compositionally biased toward basic and acidic residues. The interval 272–293 (HEAQEPREPNDEQDVDYEDADI) is disordered. A compositionally biased stretch (acidic residues) spans 282–293 (DEQDVDYEDADI).

It belongs to the GPN-loop GTPase family. In terms of assembly, heterodimers with gpn1 or gpn2. Binds to RNA polymerase II (RNAPII).

Its function is as follows. Small GTPase required for proper nuclear import of RNA polymerase II and III (RNAPII and RNAPIII). May act at an RNAP assembly step prior to nuclear import. This chain is GPN-loop GTPase 3, found in Aspergillus fumigatus (strain ATCC MYA-4609 / CBS 101355 / FGSC A1100 / Af293) (Neosartorya fumigata).